Reading from the N-terminus, the 278-residue chain is MKLQFTKMHGLGNDFIVINAINQPASLTFLDPATIRRLADRHFGIGFDQLLIVEQAREGGDFRYRIFNADGGEVEQCGNGARCFARFVRDYNLTDKNTIRVETARGIITPTIENNGEVSVNMGVPQFEPAEIPFQAAQRMPVYPLQIGDKTIEISAVSIGNPHAVQIIPDIDLAPVTTEGPKIEAHPLFPERVNAGFMQIIDRAHIRLRVFERGTGETLACGTGACAAVVCGILRGLLDTTVQVAMHGGNLQIRWDGKDKPVWMTGPAITVFEGTIDL.

Substrate is bound by residues asparagine 13, glutamine 49, and asparagine 68. The active-site Proton donor is cysteine 77. Residues 78-79, asparagine 161, asparagine 194, and 212-213 contribute to the substrate site; these read GN and ER. Cysteine 221 serves as the catalytic Proton acceptor. Position 222–223 (222–223) interacts with substrate; sequence GT.

It belongs to the diaminopimelate epimerase family. As to quaternary structure, homodimer.

It localises to the cytoplasm. The catalysed reaction is (2S,6S)-2,6-diaminopimelate = meso-2,6-diaminopimelate. Its pathway is amino-acid biosynthesis; L-lysine biosynthesis via DAP pathway; DL-2,6-diaminopimelate from LL-2,6-diaminopimelate: step 1/1. Functionally, catalyzes the stereoinversion of LL-2,6-diaminopimelate (L,L-DAP) to meso-diaminopimelate (meso-DAP), a precursor of L-lysine and an essential component of the bacterial peptidoglycan. In Nitrosomonas eutropha (strain DSM 101675 / C91 / Nm57), this protein is Diaminopimelate epimerase.